Reading from the N-terminus, the 342-residue chain is Glucokinase (342 aa).

7–12 contributes to the ATP binding site; sequence GDIGGT.

The protein belongs to the bacterial glucokinase family.

The protein resides in the cytoplasm. It carries out the reaction D-glucose + ATP = D-glucose 6-phosphate + ADP + H(+). In Nostoc sp. (strain PCC 7120 / SAG 25.82 / UTEX 2576), this protein is Glucokinase.